The chain runs to 139 residues: Large ribosomal subunit protein bL17 (139 aa).

The tract at residues 120–139 (ESAKGQDSGPVHVEGDEEAA) is disordered.

The protein belongs to the bacterial ribosomal protein bL17 family. As to quaternary structure, part of the 50S ribosomal subunit. Contacts protein L32.

In Parvibaculum lavamentivorans (strain DS-1 / DSM 13023 / NCIMB 13966), this protein is Large ribosomal subunit protein bL17.